The sequence spans 326 residues: Cinnamoyl-CoA reductase CAD2 (326 aa).

NADP(+)-binding positions include 14 to 20 (GASGYIA), arginine 39, lysine 46, 66 to 67 (NL), and 86 to 88 (TAS). Residues serine 130, tyrosine 136, arginine 141, and tyrosine 165 each contribute to the (E)-coniferaldehyde site. NADP(+)-binding positions include tyrosine 165, lysine 169, 192 to 195 (PAMV), and serine 207. Lysine 169 serves as the catalytic Proton donor. Residues methionine 194, serine 207, phenylalanine 226, valine 257, and tyrosine 290 each coordinate (E)-coniferaldehyde.

Belongs to the NAD(P)-dependent epimerase/dehydratase family. Dihydroflavonol-4-reductase subfamily.

It is found in the cytoplasm. The catalysed reaction is (E)-cinnamaldehyde + NADP(+) + CoA = (E)-cinnamoyl-CoA + NADPH + H(+). It carries out the reaction (E)-coniferaldehyde + NADP(+) + CoA = (E)-feruloyl-CoA + NADPH + H(+). It catalyses the reaction (E)-4-coumaraldehyde + NADP(+) + CoA = (E)-4-coumaroyl-CoA + NADPH + H(+). The protein operates within aromatic compound metabolism; phenylpropanoid biosynthesis. Involved in lignin biosynthesis. Regulates the monolignol composition by catalyzing the conversion of cinnamoyl-CoAs into their corresponding cinnamaldehydes. Can use coumaraldehyde and coniferaldehyde as substrates, but barely sinapaldehyde. In Medicago truncatula (Barrel medic), this protein is Cinnamoyl-CoA reductase CAD2.